The sequence spans 692 residues: Elongation factor G (692 aa).

One can recognise a tr-type G domain in the interval 8 to 283 (DKYRNIGIMA…AVVDYMPSPL (276 aa)). GTP-binding positions include 17-24 (AHIDAGKT), 81-85 (DTPGH), and 135-138 (NKMD).

The protein belongs to the TRAFAC class translation factor GTPase superfamily. Classic translation factor GTPase family. EF-G/EF-2 subfamily.

It is found in the cytoplasm. Functionally, catalyzes the GTP-dependent ribosomal translocation step during translation elongation. During this step, the ribosome changes from the pre-translocational (PRE) to the post-translocational (POST) state as the newly formed A-site-bound peptidyl-tRNA and P-site-bound deacylated tRNA move to the P and E sites, respectively. Catalyzes the coordinated movement of the two tRNA molecules, the mRNA and conformational changes in the ribosome. This is Elongation factor G from Trichlorobacter lovleyi (strain ATCC BAA-1151 / DSM 17278 / SZ) (Geobacter lovleyi).